Here is an 89-residue protein sequence, read N- to C-terminus: Small ribosomal subunit protein uS14 (89 aa).

The protein belongs to the universal ribosomal protein uS14 family. Part of the 30S ribosomal subunit. Contacts proteins S3 and S10.

Binds 16S rRNA, required for the assembly of 30S particles and may also be responsible for determining the conformation of the 16S rRNA at the A site. The chain is Small ribosomal subunit protein uS14 from Leuconostoc citreum (strain KM20).